Consider the following 172-residue polypeptide: Small ribosomal subunit protein bS16 (172 aa).

A disordered region spans residues 125-172; that stretch reads KKRKAKEEAEAKAAAEKAAEEAAAAEAAKAEEEAAKAEEADSAEESAE. Composition is skewed to basic and acidic residues over residues 129–144 and 152–163; these read AKEEAEAKAAAEKAAE and AKAEEEAAKAEE.

The protein belongs to the bacterial ribosomal protein bS16 family.

In Corynebacterium aurimucosum (strain ATCC 700975 / DSM 44827 / CIP 107346 / CN-1) (Corynebacterium nigricans), this protein is Small ribosomal subunit protein bS16.